The following is a 92-amino-acid chain: Signal recognition particle 19 kDa protein (92 aa).

It belongs to the SRP19 family. In terms of assembly, part of the signal recognition particle protein translocation system, which is composed of SRP and FtsY. Archaeal SRP consists of a 7S RNA molecule of 300 nucleotides and two protein subunits: SRP54 and SRP19.

The protein localises to the cytoplasm. Involved in targeting and insertion of nascent membrane proteins into the cytoplasmic membrane. Binds directly to 7S RNA and mediates binding of the 54 kDa subunit of the SRP. This chain is Signal recognition particle 19 kDa protein, found in Halobacterium salinarum (strain ATCC 29341 / DSM 671 / R1).